A 299-amino-acid polypeptide reads, in one-letter code: Bifunctional protein FolD (299 aa).

NADP(+)-binding positions include 166–168, Ser191, and Ile232; that span reads GRS.

Belongs to the tetrahydrofolate dehydrogenase/cyclohydrolase family. Homodimer.

The catalysed reaction is (6R)-5,10-methylene-5,6,7,8-tetrahydrofolate + NADP(+) = (6R)-5,10-methenyltetrahydrofolate + NADPH. It catalyses the reaction (6R)-5,10-methenyltetrahydrofolate + H2O = (6R)-10-formyltetrahydrofolate + H(+). It functions in the pathway one-carbon metabolism; tetrahydrofolate interconversion. In terms of biological role, catalyzes the oxidation of 5,10-methylenetetrahydrofolate to 5,10-methenyltetrahydrofolate and then the hydrolysis of 5,10-methenyltetrahydrofolate to 10-formyltetrahydrofolate. The sequence is that of Bifunctional protein FolD from Dinoroseobacter shibae (strain DSM 16493 / NCIMB 14021 / DFL 12).